The sequence spans 393 residues: tRNA(Met) cytidine acetate ligase (393 aa).

3 residues coordinate ATP: glycine 81, asparagine 142, and arginine 167.

Belongs to the TmcAL family.

It localises to the cytoplasm. It catalyses the reaction cytidine(34) in elongator tRNA(Met) + acetate + ATP = N(4)-acetylcytidine(34) in elongator tRNA(Met) + AMP + diphosphate. Catalyzes the formation of N(4)-acetylcytidine (ac(4)C) at the wobble position of elongator tRNA(Met), using acetate and ATP as substrates. First activates an acetate ion to form acetyladenylate (Ac-AMP) and then transfers the acetyl group to tRNA to form ac(4)C34. The sequence is that of tRNA(Met) cytidine acetate ligase from Bacillus thuringiensis subsp. konkukian (strain 97-27).